A 653-amino-acid chain; its full sequence is Transcription factor Ken 1 (653 aa).

In terms of domain architecture, BTB spans 35–103; the sequence is TDLLLICDGK…LYSGQVYVRS (69 aa). 4 disordered regions span residues 126-215, 234-305, 429-451, and 512-534; these read NSDG…DRDR, NNHP…SDDA, LSNNNNSSSNNNNNNNRIRPPSA, and ELSARASAAGGGGGGSGGNGSGS. Positions 145 to 157 are enriched in polar residues; that stretch reads NRNTEGITGSSVV. Over residues 251–272 the composition is skewed to basic residues; it reads GHHHHHHHHHHHRQLHQIKTRS. Polar residues predominate over residues 286-299; the sequence is SDPVNLSIVKQQQD. Low complexity predominate over residues 430 to 444; the sequence is SNNNNSSSNNNNNNN. The segment covering 520-534 has biased composition (gly residues); it reads AGGGGGGSGGNGSGS. C2H2-type zinc fingers lie at residues 555–577, 583–606, and 619–641; these read YRCEYCGKTFGMSWNLKTHLRVH, FACRLCVAMFKQKAHLLKHLCSVH, and YTCCFCSLVFETLQELVRHLSGH.

It is found in the nucleus. Its function is as follows. Transcription factor required for terminalia development. Negative regulator of the JAK/STAT pathway: represses JAK/STAT-dependent expression of ventral veins lacking (vvl) in the posterior spiracles. In Culex quinquefasciatus (Southern house mosquito), this protein is Transcription factor Ken 1.